Consider the following 249-residue polypeptide: tRNA pseudouridine synthase A (249 aa).

Residue Asp53 is the Nucleophile of the active site. Tyr111 is a substrate binding site.

Belongs to the tRNA pseudouridine synthase TruA family. Homodimer.

The catalysed reaction is uridine(38/39/40) in tRNA = pseudouridine(38/39/40) in tRNA. Formation of pseudouridine at positions 38, 39 and 40 in the anticodon stem and loop of transfer RNAs. In Streptococcus pyogenes serotype M3 (strain ATCC BAA-595 / MGAS315), this protein is tRNA pseudouridine synthase A.